Reading from the N-terminus, the 314-residue chain is MDKKKGILLVALGTPRSCEADDVRDYLKEFLGDPLVIQKPRWLWLPILNGIILKVRPQKSAEMYKKIWTDEGSPLMIYTVAQAKQLQDMREDFDVRFAMTYGEPRIDKVIAEMKESGVEEITVLPLYPQYSLTTVEPVIQQVKKIDDKIKVIRDFHKVESYSDLLAESIREKWQANDYDKLVLSYHGIPLSYVTKKKDAYEEQCKETTRLVVSKLGLREEEYEHTYQSKFGPEKWLEPATIDRVAELPKENAKKVLICSPAFVADCLETLFELEIENKEVFVENGGETFDFVHPFNDSLDFTRVLSEVVDQNRL.

Residues His-186 and Glu-268 each contribute to the Fe(2+) site.

Belongs to the ferrochelatase family.

It is found in the cytoplasm. It carries out the reaction Fe-coproporphyrin III + 2 H(+) = coproporphyrin III + Fe(2+). Its pathway is porphyrin-containing compound metabolism; protoheme biosynthesis. Its function is as follows. Involved in coproporphyrin-dependent heme b biosynthesis. Catalyzes the insertion of ferrous iron into coproporphyrin III to form Fe-coproporphyrin III. The protein is Coproporphyrin III ferrochelatase of Lactococcus lactis subsp. lactis (strain IL1403) (Streptococcus lactis).